Reading from the N-terminus, the 397-residue chain is Serine/threonine-protein kinase 17A (397 aa).

Residues 1–23 (MIPLEKPGSGGSPSAAASGSGPG) are disordered. Ser9 bears the Phosphoserine mark. The region spanning 44–304 (LSPGRELGRG…AEECLKHPWL (261 aa)) is the Protein kinase domain. ATP-binding positions include 50–58 (LGRGKFAVV) and Lys73. The active-site Proton acceptor is the Asp169.

The protein belongs to the protein kinase superfamily. CAMK Ser/Thr protein kinase family. DAP kinase subfamily. Post-translationally, autophosphorylated. Highly expressed in bone marrow. Lower levels in brain, heart, lung, liver and kidney.

The protein resides in the nucleus. It catalyses the reaction L-seryl-[protein] + ATP = O-phospho-L-seryl-[protein] + ADP + H(+). The catalysed reaction is L-threonyl-[protein] + ATP = O-phospho-L-threonyl-[protein] + ADP + H(+). Its activity is regulated as follows. Inhibited by thiazolidinedione-type compounds: inhibited by furan- and pyridone- thiazolidinediones. In terms of biological role, acts as a positive regulator of apoptosis. May also act as a regulator of cellular reactive oxygen species. This chain is Serine/threonine-protein kinase 17A (STK17A), found in Oryctolagus cuniculus (Rabbit).